Here is a 411-residue protein sequence, read N- to C-terminus: Putative competence-damage inducible protein (411 aa).

It belongs to the CinA family.

In Alkaliphilus metalliredigens (strain QYMF), this protein is Putative competence-damage inducible protein.